A 465-amino-acid chain; its full sequence is Adenosine 3'-phospho 5'-phosphosulfate transporter 1 (465 aa).

10 consecutive transmembrane segments (helical) span residues 13–33 (LVICSFIVVTLLVIHFFSDLL), 61–81 (FLKLLVNCFGYSCVFVPGFLI), 142–162 (AVQLLWCFGGLMISYLTWGVL), 185–205 (QFLVFSNRLLAFLVALAYLQW), 270–290 (SYEYVTALLISLGMIFFMSGS), 299–319 (VTTLTGIFLLSMYMVFDSFTA), 339–359 (GVNLFSSIFTGASLSMQGGFM), 370–390 (KFVFDMVVLSVCSAVGQLFIY), 391–407 (HTIDVFGPVVFTIIMTL), and 424–444 (ISLLGIFGVLIVFVAIFLRVY).

The protein belongs to the nucleotide-sugar transporter family. SLC35B subfamily. In terms of tissue distribution, expressed throughout embryogenesis. During oogenesis, it is expressed strongly in the nurse cells of the germline. Maternally expressed at the syncytial blastoderm stage. Zygotically expressed, from after germ-band elongation in the invaginating salivary gland placodes. Remains expressed predominantly in this tissue throughout embryogenesis, but low-level expression may also be present throughout the embryo.

Its subcellular location is the golgi apparatus membrane. Mediates the transport of adenosine 3'-phospho 5'-phosphosulfate (PAPS), from cytosol into Golgi. PAPS is a universal sulfuryl donor for sulfation events that take place in the Golgi. Required for the dorsoventral patterning, suggesting that it mediates the transport of the sulfate donor required for the sulfotransferase activity of pip (pipe). In Drosophila melanogaster (Fruit fly), this protein is Adenosine 3'-phospho 5'-phosphosulfate transporter 1 (sll).